The chain runs to 171 residues: Protein E6 (171 aa).

The interval 1 to 28 is disordered; it reads MATTDSSTDSADEGPSPKSSYCDTTETK. Residues 17–28 are compositionally biased toward polar residues; it reads PKSSYCDTTETK. 2 zinc fingers span residues 58 to 94 and 131 to 167; these read CNFC…CRVC and CYTC…CRLC.

The protein belongs to the papillomaviridae E6 protein family. Forms homodimers. Interacts with ubiquitin-protein ligase UBE3A/E6-AP; this interaction stimulates UBE3A ubiquitin activity. Interacts with host BAK1.

It is found in the host cytoplasm. Its subcellular location is the host nucleus. In terms of biological role, plays a major role in the induction and maintenance of cellular transformation. E6 associates with host UBE3A/E6-AP ubiquitin-protein ligase and modulates its activity. Protects host keratinocytes from apoptosis by mediating the degradation of host BAK1. May also inhibit host immune response. The chain is Protein E6 from Human papillomavirus 14.